Here is a 147-residue protein sequence, read N- to C-terminus: SsrA-binding protein (147 aa).

Belongs to the SmpB family.

It is found in the cytoplasm. Its function is as follows. Required for rescue of stalled ribosomes mediated by trans-translation. Binds to transfer-messenger RNA (tmRNA), required for stable association of tmRNA with ribosomes. tmRNA and SmpB together mimic tRNA shape, replacing the anticodon stem-loop with SmpB. tmRNA is encoded by the ssrA gene; the 2 termini fold to resemble tRNA(Ala) and it encodes a 'tag peptide', a short internal open reading frame. During trans-translation Ala-aminoacylated tmRNA acts like a tRNA, entering the A-site of stalled ribosomes, displacing the stalled mRNA. The ribosome then switches to translate the ORF on the tmRNA; the nascent peptide is terminated with the 'tag peptide' encoded by the tmRNA and targeted for degradation. The ribosome is freed to recommence translation, which seems to be the essential function of trans-translation. This chain is SsrA-binding protein, found in Mycoplasma pneumoniae (strain ATCC 29342 / M129 / Subtype 1) (Mycoplasmoides pneumoniae).